The chain runs to 239 residues: Large ribosomal subunit protein uL2 (239 aa).

Disordered regions lie at residues 1-28 (MGKRILPQRMGRGTPTFRSPSHRRVGPA) and 199-239 (SHPH…RRKG). Residues 225 to 239 (KVGHIAARRTGRRKG) show a composition bias toward basic residues.

It belongs to the universal ribosomal protein uL2 family. In terms of assembly, part of the 50S ribosomal subunit. Forms a bridge to the 30S subunit in the 70S ribosome.

Functionally, one of the primary rRNA binding proteins. Required for association of the 30S and 50S subunits to form the 70S ribosome, for tRNA binding and peptide bond formation. It has been suggested to have peptidyltransferase activity; this is somewhat controversial. Makes several contacts with the 16S rRNA in the 70S ribosome. This Staphylothermus marinus (strain ATCC 43588 / DSM 3639 / JCM 9404 / F1) protein is Large ribosomal subunit protein uL2.